The chain runs to 196 residues: FMN-dependent NADH:quinone oxidoreductase (196 aa).

Residues Ser-10, 16-18 (SQS), 93-96 (MYNF), and 137-140 (TRGG) contribute to the FMN site.

Belongs to the azoreductase type 1 family. As to quaternary structure, homodimer. It depends on FMN as a cofactor.

It carries out the reaction 2 a quinone + NADH + H(+) = 2 a 1,4-benzosemiquinone + NAD(+). The catalysed reaction is N,N-dimethyl-1,4-phenylenediamine + anthranilate + 2 NAD(+) = 2-(4-dimethylaminophenyl)diazenylbenzoate + 2 NADH + 2 H(+). Functionally, quinone reductase that provides resistance to thiol-specific stress caused by electrophilic quinones. Also exhibits azoreductase activity. Catalyzes the reductive cleavage of the azo bond in aromatic azo compounds to the corresponding amines. The chain is FMN-dependent NADH:quinone oxidoreductase from Shewanella amazonensis (strain ATCC BAA-1098 / SB2B).